The following is a 188-amino-acid chain: HTH-type transcriptional regulator LmrA (188 aa).

Residues 4 to 64 (GDSREKILSA…IEAVNEMKEY (61 aa)) enclose the HTH tetR-type domain. The H-T-H motif DNA-binding region spans 27–46 (GLNQIIKESGAPKGSLYYHF).

Acts as a repressor of the lincomycin-resistance (lmrAB) and yxaGH operons. The sequence is that of HTH-type transcriptional regulator LmrA (lmrA) from Bacillus subtilis (strain 168).